The sequence spans 1459 residues: Endogenous retrovirus group K member 7 Pol protein (1459 aa).

One can recognise a Reverse transcriptase domain in the interval 57–245 (LEKGHIEPSF…TPFHYLGMQI (189 aa)). Residues 161–164 (LPQG) carry the LPQG motif. The YXDD signature appears at 195 to 198 (YIDD). The RNase H type-1 domain occupies 460-590 (LENALTVFTD…ADLLVSSALI (131 aa)). Mg(2+)-binding residues include aspartate 469, glutamate 497, aspartate 517, and aspartate 582. The Integrase-type zinc-finger motif lies at 587–628 (SALIKAQELHALTHVNAAGLKNKFDVTWKQAKDIVQHCTQCQ). Zn(2+) is bound by residues histidine 596, histidine 600, cysteine 624, and cysteine 627. The 162-residue stretch at 642 to 803 (RGLCPNALWQ…TSAEQHLTGK (162 aa)) folds into the Integrase catalytic domain. A DNA-binding region (integrase-type) is located at residues 811–859 (KLIWWKDNKNKTWEIGKVITWGRGFACVSPGENQLPVWIPTRHLKFYNE).

It belongs to the beta type-B retroviral polymerase family. HERV class-II K(HML-2) pol subfamily.

The enzyme catalyses DNA(n) + a 2'-deoxyribonucleoside 5'-triphosphate = DNA(n+1) + diphosphate. It carries out the reaction Endonucleolytic cleavage to 5'-phosphomonoester.. Early post-infection, the reverse transcriptase converts the viral RNA genome into double-stranded viral DNA. The RNase H domain of the reverse transcriptase performs two functions. It degrades the RNA template and specifically removes the RNA primer from the RNA/DNA hybrid. Following nuclear import, the integrase catalyzes the insertion of the linear, double-stranded viral DNA into the host cell chromosome. Endogenous Pol proteins may have kept, lost or modified their original function during evolution. The protein is Endogenous retrovirus group K member 7 Pol protein (ERVK-7) of Homo sapiens (Human).